Consider the following 962-residue polypeptide: Protease 3 (962 aa).

A signal peptide spans 1–23; the sequence is MPRSTWFKALLLLVALWAPLSQA. Histidine 88 lines the Zn(2+) pocket. The active-site Proton acceptor is glutamate 91. Zn(2+) is bound by residues histidine 92 and glutamate 169.

It belongs to the peptidase M16 family. Monomer. Zn(2+) is required as a cofactor.

The protein resides in the periplasm. It catalyses the reaction Preferential cleavage of 16-Tyr-|-Leu-17 and 25-Phe-|-Tyr-26 bonds of oxidized insulin B chain. Also acts on other substrates of Mw less than 7 kDa such as insulin and glucagon.. In terms of biological role, endopeptidase that degrades small peptides of less than 7 kDa, such as glucagon and insulin. This is Protease 3 (ptrA) from Escherichia coli (strain K12).